Here is a 430-residue protein sequence, read N- to C-terminus: Serine hydroxymethyltransferase (430 aa).

120 to 122 provides a ligand contact to (6S)-5,6,7,8-tetrahydrofolate; the sequence is GHI. K226 bears the N6-(pyridoxal phosphate)lysine mark.

This sequence belongs to the SHMT family. Homodimer. Pyridoxal 5'-phosphate is required as a cofactor.

Its subcellular location is the cytoplasm. Its pathway is amino-acid biosynthesis; glycine biosynthesis; glycine from L-serine: step 1/1. In terms of biological role, catalyzes the reversible interconversion of serine and glycine with a modified folate serving as the one-carbon carrier. Also exhibits a pteridine-independent aldolase activity toward beta-hydroxyamino acids, producing glycine and aldehydes, via a retro-aldol mechanism. This chain is Serine hydroxymethyltransferase, found in Pyrobaculum calidifontis (strain DSM 21063 / JCM 11548 / VA1).